We begin with the raw amino-acid sequence, 250 residues long: ATP synthase subunit a (250 aa).

5 helical membrane-spanning segments follow: residues 27-47, 83-103, 129-149, 191-211, and 219-239; these read TDTV…AFYL, IAPF…ISNW, INYV…AGIW, IFAG…IMWA, and FDLF…ILYF.

This sequence belongs to the ATPase A chain family. F-type ATPases have 2 components, CF(1) - the catalytic core - and CF(0) - the membrane proton channel. CF(1) has five subunits: alpha(3), beta(3), gamma(1), delta(1), epsilon(1). CF(0) has three main subunits: a(1), b(2) and c(9-12). The alpha and beta chains form an alternating ring which encloses part of the gamma chain. CF(1) is attached to CF(0) by a central stalk formed by the gamma and epsilon chains, while a peripheral stalk is formed by the delta and b chains.

Its subcellular location is the cell membrane. Key component of the proton channel; it plays a direct role in the translocation of protons across the membrane. This Mycobacterium ulcerans (strain Agy99) protein is ATP synthase subunit a.